A 416-amino-acid polypeptide reads, in one-letter code: Enolase (416 aa).

Gln162 lines the (2R)-2-phosphoglycerate pocket. Catalysis depends on Glu204, which acts as the Proton donor. 3 residues coordinate Mg(2+): Asp241, Glu282, and Asp309. 4 residues coordinate (2R)-2-phosphoglycerate: Lys334, Arg363, Ser364, and Lys385. Lys334 serves as the catalytic Proton acceptor.

It belongs to the enolase family. Requires Mg(2+) as cofactor.

It is found in the cytoplasm. The protein resides in the secreted. The protein localises to the cell surface. The enzyme catalyses (2R)-2-phosphoglycerate = phosphoenolpyruvate + H2O. The protein operates within carbohydrate degradation; glycolysis; pyruvate from D-glyceraldehyde 3-phosphate: step 4/5. In terms of biological role, catalyzes the reversible conversion of 2-phosphoglycerate (2-PG) into phosphoenolpyruvate (PEP). It is essential for the degradation of carbohydrates via glycolysis. The chain is Enolase from Campylobacter concisus (strain 13826).